A 347-amino-acid chain; its full sequence is MVRLDLPWDLVDEILSRLPATSLGRLRFTCKRWNALFKDPEFITKQFHKAAKQDLVLMLSNFGVYSMSTNLKEIPNNIEIAQVFHCNGLLLCSTEEGNKTKLVVVNPCTGQTRWIEPRTDYNYNHDIALGYGNNSTKKSYDSYKILRITYGCKLVEIFELKSNSWRVLSKVHPNVEKHYYGGVSFKGNTYWLSYTKFNILSFDFTTETFRSVPLPFLYQDGFVTLALSVVREEQLLLLRSRFDMGQVGIWMCNKIDTETVLSWSKSFTLEFDSLRDLPVMSILRIFIEEDKKVIVVDCDDRWKENMIYIVGKNGFKKLSYEKDRSNLWRLPFFFSYVPSLVGLYPPM.

In terms of domain architecture, F-box spans 1–50 (MVRLDLPWDLVDEILSRLPATSLGRLRFTCKRWNALFKDPEFITKQFHKA). 4 LRR repeats span residues 59–82 (LSNF…EIAQ), 152–177 (CKLV…NVEK), 196–220 (KFNI…LYQD), and 261–285 (LSWS…ILRI). One copy of the Kelch 1 repeat lies at 138-187 (KSYDSYKILRITYGCKLVEIFELKSNSWRVLSKVHPNVEKHYYGGVSFKG). One copy of the Kelch 2 repeat lies at 306-347 (MIYIVGKNGFKKLSYEKDRSNLWRLPFFFSYVPSLVGLYPPM).

This chain is F-box/LRR-repeat/kelch-repeat protein At2g27520, found in Arabidopsis thaliana (Mouse-ear cress).